The primary structure comprises 415 residues: D-threonate kinase (415 aa).

Residues Asp9, Arg53, and 81 to 84 (KIDS) each bind substrate. ATP-binding positions include Ser251, 345–348 (GGET), and Gly392.

It belongs to the four-carbon acid sugar kinase family.

The catalysed reaction is D-threonate + ATP = 4-O-phospho-D-threonate + ADP + H(+). Its function is as follows. Catalyzes the ATP-dependent phosphorylation of D-threonate to D-threonate 4-phosphate. Can also phosphorylate 4-hydroxy-L-threonine, with lower efficiency. The chain is D-threonate kinase from Cupriavidus necator (strain ATCC 17699 / DSM 428 / KCTC 22496 / NCIMB 10442 / H16 / Stanier 337) (Ralstonia eutropha).